A 29-amino-acid polypeptide reads, in one-letter code: Varv peptide E (29 aa).

The cyclopeptide (Gly-Asn) cross-link spans 1–29; sequence GLPICGETCVGGTCNTPGCSCSWPVCTRN. Disulfide bonds link cysteine 5/cysteine 19, cysteine 9/cysteine 21, and cysteine 14/cysteine 26.

Post-translationally, this is a cyclic peptide.

Functionally, probably participates in a plant defense mechanism. Has cytotoxic activity against human lymphoma U-937 GTB and human myeloma RPMI-8226/s cell lines. This Viola arvensis (European field pansy) protein is Varv peptide E.